Here is a 199-residue protein sequence, read N- to C-terminus: uncharacterized protein (199 aa).

Helical transmembrane passes span 35-55 (CELA…IFYD), 57-77 (FVIF…YLEF), 94-114 (LSAA…IFFG), and 131-151 (YYGC…ASFA).

It is found in the membrane. This is an uncharacterized protein from Caenorhabditis elegans.